Here is a 235-residue protein sequence, read N- to C-terminus: RAD9, HUS1, RAD1-interacting nuclear orphan protein 1 (235 aa).

The residue at position 50 (serine 50) is a Phosphoserine. Residues 54–60 carry the RAD1-binding motif motif; it reads SWVSPQF. Disordered regions lie at residues 75 to 106, 111 to 130, and 149 to 198; these read HRDQ…SETL, RVQP…VPLF, and VFAP…LVKD. The span at 96–106 shows a compositional bias: polar residues; the sequence is ESPQSSSSETL. Positions 123 to 130 match the D-box motif; sequence RRPLVPLF. Basic and acidic residues predominate over residues 161–173; the sequence is SVRDDPISPDQKE. The KEN box signature appears at 171–175; the sequence is QKENS.

As to quaternary structure, interacts (when phosphorylated by PLK1) with POLQ; promoting POLQ recruitment to DNA damage sites. Interacts with RAD1; interaction is direct and promotes association with the 9-1-1 (RAD9-RAD1-HUS1) complex. Interacts with RAD18. Interacts with TOPBP1. Interacts with UBE2N. Phosphorylated at Ser-50 by PLK1, promoting interaction with polymerase theta (POLQ). In terms of processing, ubiquitinated and degraded by the APC/C complex upon mitotic exit.

Its subcellular location is the nucleus. The protein resides in the chromosome. Involved in microhomology-mediated end-joining (MMEJ) DNA repair by promoting recruitment of polymerase theta (POLQ) to DNA damage sites during mitosis. MMEJ is an alternative non-homologous end-joining (NHEJ) machinery that takes place during mitosis to repair double-strand breaks in DNA that originate in S-phase. Accumulates in M-phase; following phosphorylation by PLK1, interacts with POLQ, enabling its recruitment to double-strand breaks for subsequent repair. Also involved in the DNA damage response (DDR) signaling in response to genotoxic stresses such as ionizing radiation (IR) during the S phase. Recruited to sites of DNA damage through interaction with the 9-1-1 cell-cycle checkpoint response complex and TOPBP1 in a ATR-dependent manner. Required for the progression of the G1 to S phase transition. Plays a role in the stimulation of CHEK1 phosphorylation. This chain is RAD9, HUS1, RAD1-interacting nuclear orphan protein 1 (Rhno1), found in Mus musculus (Mouse).